Here is a 507-residue protein sequence, read N- to C-terminus: Variant surface glycoprotein ILTAT 1.25 (507 aa).

An N-terminal signal peptide occupies residues 1-21 (MQSQQQPVFISIILLAINTDA). Positions 83 to 95 (EPEAAPKESRSDE) are enriched in basic and acidic residues. The segment at 83–102 (EPEAAPKESRSDETPEACKA) is disordered. Asn141 and Asn371 each carry an N-linked (GlcNAc...) asparagine glycan. Low complexity predominate over residues 384-395 (PTKQPPAKAAAA). The segment at 384–474 (PTKQPPAKAA…KKEEECKSPN (91 aa)) is disordered. Residues 396–420 (PEKKSNPQKDCNKNTKKRDCKEGDG) are compositionally biased toward basic and acidic residues. Residues 444 to 455 (SAAGAGDAGASD) show a composition bias toward low complexity. Positions 456-474 (TEAKKCSDKKKEEECKSPN) are enriched in basic and acidic residues. A lipid anchor (GPI-anchor amidated aspartate) is attached at Asp484. Positions 485–507 (SSILANKQFALSVASAAFVALLF) are cleaved as a propeptide — removed in mature form.

Its subcellular location is the cell membrane. In terms of biological role, VSG forms a coat on the surface of the parasite. The trypanosome evades the immune response of the host by expressing a series of antigenically distinct VSGs from an estimated 1000 VSG genes. The sequence is that of Variant surface glycoprotein ILTAT 1.25 from Trypanosoma brucei brucei.